The following is a 92-amino-acid chain: N(2)-fixation sustaining protein CowN (92 aa).

This sequence belongs to the CowN family.

Functionally, is required to sustain N(2)-dependent growth in the presence of low levels of carbon monoxide (CO). Probably acts by protecting the N(2) fixation ability of the nitrogenase complex, which is inactivated in the presence of CO. This Rhodopseudomonas palustris (strain BisB18) protein is N(2)-fixation sustaining protein CowN.